The primary structure comprises 337 residues: Glyceraldehyde-3-phosphate dehydrogenase 3 (337 aa).

NAD(+)-binding positions include 12-13 (RM) and lysine 80. Residues 152–154 (SCT) and threonine 183 each bind D-glyceraldehyde 3-phosphate. Cysteine 153 functions as the Nucleophile in the catalytic mechanism. Asparagine 184 is an NAD(+) binding site. Residues arginine 198, 211–212 (TG), and arginine 234 each bind D-glyceraldehyde 3-phosphate. Residue asparagine 317 participates in NAD(+) binding.

It belongs to the glyceraldehyde-3-phosphate dehydrogenase family. Homotetramer.

Its subcellular location is the cytoplasm. The catalysed reaction is D-glyceraldehyde 3-phosphate + phosphate + NAD(+) = (2R)-3-phospho-glyceroyl phosphate + NADH + H(+). It participates in carbohydrate degradation; glycolysis; pyruvate from D-glyceraldehyde 3-phosphate: step 1/5. The protein operates within carbohydrate biosynthesis; gluconeogenesis. Functionally, catalyzes the oxidative phosphorylation of glyceraldehyde 3-phosphate (G3P) to 1,3-bisphosphoglycerate (BPG) using the cofactor NAD. The first reaction step involves the formation of a hemiacetal intermediate between G3P and a cysteine residue, and this hemiacetal intermediate is then oxidized to a thioester, with concomitant reduction of NAD to NADH. The reduced NADH is then exchanged with the second NAD, and the thioester is attacked by a nucleophilic inorganic phosphate to produce BPG. The sequence is that of Glyceraldehyde-3-phosphate dehydrogenase 3 (gap3) from Nostoc sp. (strain PCC 7120 / SAG 25.82 / UTEX 2576).